Reading from the N-terminus, the 512-residue chain is Maturase K (512 aa).

Belongs to the intron maturase 2 family. MatK subfamily.

It is found in the plastid. The protein localises to the chloroplast. Usually encoded in the trnK tRNA gene intron. Probably assists in splicing its own and other chloroplast group II introns. This chain is Maturase K, found in Amorphophallus paeoniifolius (Whitespot giant arum).